Reading from the N-terminus, the 1561-residue chain is Rho GTPase-activating protein 190 (1561 aa).

FF domains are found at residues 252–320 (YQES…HMKK), 365–419 (YLQN…YLNS), 426–480 (KIGW…HQDD), and 482–547 (IEKS…HLRF). The pG1 pseudoGTPase domain maps to 592-765 (SGSDRTLNLL…EPYPSNHTDL (174 aa)). One can recognise a pG2 pseudoGTPase domain in the interval 766-926 (RILCCIFCGD…LKTAWDNKYE (161 aa)). Ser-973, Ser-975, Ser-985, Ser-988, and Ser-996 each carry phosphoserine. The interval 1054-1074 (KIRPKGPSQTLKVGEAPSRNC) is disordered. The Rho-GAP domain maps to 1349–1552 (AQFGKLMITS…TMIDQFPYLF (204 aa)).

With respect to regulation, negatively regulated by integrin, bsk and Src/Src64B. Functionally, GTPase-activating protein (GAP) for RhoA/Rho1 that plays an essential role in the stability of dorsal branches of mushroom body (MB) neurons. The MB neurons are the center for olfactory learning and memory. Acts by converting RhoA/Rho1 to an inactive GDP-bound state, leading to repress the RhoA/Rho1-Drok-MRLC signaling pathway thereby maintaining axon branch stability. This chain is Rho GTPase-activating protein 190 (RhoGAPp190), found in Drosophila melanogaster (Fruit fly).